The primary structure comprises 239 residues: Pyridoxine 5'-phosphate synthase (239 aa).

Residue Asn7 coordinates 3-amino-2-oxopropyl phosphate. 9–10 (DH) contacts 1-deoxy-D-xylulose 5-phosphate. Arg18 provides a ligand contact to 3-amino-2-oxopropyl phosphate. His43 (proton acceptor) is an active-site residue. 1-deoxy-D-xylulose 5-phosphate contacts are provided by Arg45 and His50. The Proton acceptor role is filled by Glu70. Position 100 (Thr100) interacts with 1-deoxy-D-xylulose 5-phosphate. The active-site Proton donor is His191. 3-amino-2-oxopropyl phosphate-binding positions include Gly192 and 213–214 (GH).

The protein belongs to the PNP synthase family. In terms of assembly, homooctamer; tetramer of dimers.

Its subcellular location is the cytoplasm. The enzyme catalyses 3-amino-2-oxopropyl phosphate + 1-deoxy-D-xylulose 5-phosphate = pyridoxine 5'-phosphate + phosphate + 2 H2O + H(+). Its pathway is cofactor biosynthesis; pyridoxine 5'-phosphate biosynthesis; pyridoxine 5'-phosphate from D-erythrose 4-phosphate: step 5/5. Catalyzes the complicated ring closure reaction between the two acyclic compounds 1-deoxy-D-xylulose-5-phosphate (DXP) and 3-amino-2-oxopropyl phosphate (1-amino-acetone-3-phosphate or AAP) to form pyridoxine 5'-phosphate (PNP) and inorganic phosphate. The sequence is that of Pyridoxine 5'-phosphate synthase from Trichormus variabilis (strain ATCC 29413 / PCC 7937) (Anabaena variabilis).